Reading from the N-terminus, the 82-residue chain is Large ribosomal subunit protein bL31B (82 aa).

Belongs to the bacterial ribosomal protein bL31 family. Type B subfamily. Part of the 50S ribosomal subunit.

This chain is Large ribosomal subunit protein bL31B, found in Dichelobacter nodosus (strain VCS1703A).